A 246-amino-acid polypeptide reads, in one-letter code: Probable transcriptional regulatory protein GK2594 (246 aa).

It belongs to the TACO1 family.

The protein resides in the cytoplasm. The chain is Probable transcriptional regulatory protein GK2594 from Geobacillus kaustophilus (strain HTA426).